Reading from the N-terminus, the 445-residue chain is Tubulin beta-4B chain (445 aa).

The MREI motif signature appears at 1-4 (MREI). Gln-11 serves as a coordination point for GTP. A Phosphothreonine modification is found at Thr-55. Lys-58 carries the N6-acetyllysine modification. GTP is bound by residues Glu-69, Ser-138, Gly-142, Thr-143, and Gly-144. Glu-69 is a binding site for Mg(2+). Ser-172 is modified (phosphoserine; by CDK1). Positions 204 and 226 each coordinate GTP. The segment at 426–445 (QDATAEEEGEFEEEAEEEVA) is disordered. Over residues 429–445 (TAEEEGEFEEEAEEEVA) the composition is skewed to acidic residues. Position 438 is a 5-glutamyl polyglutamate (Glu-438).

This sequence belongs to the tubulin family. Dimer of alpha and beta chains. A typical microtubule is a hollow water-filled tube with an outer diameter of 25 nm and an inner diameter of 15 nM. Alpha-beta heterodimers associate head-to-tail to form protofilaments running lengthwise along the microtubule wall with the beta-tubulin subunit facing the microtubule plus end conferring a structural polarity. Microtubules usually have 13 protofilaments but different protofilament numbers can be found in some organisms and specialized cells. Component of sperm flagellar doublet microtubules. The cofactor is Mg(2+). Post-translationally, some glutamate residues at the C-terminus are polyglycylated, resulting in polyglycine chains on the gamma-carboxyl group. Glycylation is mainly limited to tubulin incorporated into axonemes (cilia and flagella) whereas glutamylation is prevalent in neuronal cells, centrioles, axonemes, and the mitotic spindle. Both modifications can coexist on the same protein on adjacent residues, and lowering polyglycylation levels increases polyglutamylation, and reciprocally. Cilia and flagella glycylation is required for their stability and maintenance. Flagella glycylation controls sperm motility. Some glutamate residues at the C-terminus are polyglutamylated, resulting in polyglutamate chains on the gamma-carboxyl group. Polyglutamylation plays a key role in microtubule severing by spastin (SPAST). SPAST preferentially recognizes and acts on microtubules decorated with short polyglutamate tails: severing activity by SPAST increases as the number of glutamates per tubulin rises from one to eight, but decreases beyond this glutamylation threshold. Glutamylation is also involved in cilia motility. In terms of processing, phosphorylated on Ser-172 by CDK1 during the cell cycle, from metaphase to telophase, but not in interphase. This phosphorylation inhibits tubulin incorporation into microtubules.

The protein resides in the cytoplasm. It is found in the cytoskeleton. The protein localises to the flagellum axoneme. In terms of biological role, tubulin is the major constituent of microtubules, a cylinder consisting of laterally associated linear protofilaments composed of alpha- and beta-tubulin heterodimers. Microtubules grow by the addition of GTP-tubulin dimers to the microtubule end, where a stabilizing cap forms. Below the cap, tubulin dimers are in GDP-bound state, owing to GTPase activity of alpha-tubulin. This is Tubulin beta-4B chain (Tubb4b) from Rattus norvegicus (Rat).